The primary structure comprises 403 residues: GPI-N-acetylgalactosamine transferase PGAP4 (403 aa).

At 1-22 (MSTSTSPAAMLLRRLRRLSWGS) the chain is on the cytoplasmic side. A helical membrane pass occupies residues 23 to 43 (TAVQLFILTVVTFGLLAPLAC). Residues 44–259 (HRLLHSYFYL…RLQHYTNPEP (216 aa)) lie on the Lumenal side of the membrane. Val-109 contacts UDP-N-acetyl-alpha-D-galactosamine. 2 disulfide bridges follow: Cys-132–Cys-136 and Cys-144–Cys-194. The DXD motif motif lies at 211 to 213 (EDD). A helical membrane pass occupies residues 260–280 (MRILEWVGVGMLLGPLLTWIY). The Cytoplasmic portion of the chain corresponds to 281–287 (MRFASRP). Residues 288–308 (GFSWPVMLFFSLYSMGLVELV) form a helical membrane-spanning segment. The Lumenal portion of the chain corresponds to 309 to 403 (GRHYFLELRR…LRYNFHPSLL (95 aa)). Cys-332 and Cys-333 are disulfide-bonded. Residues Thr-334, Pro-335, and Lys-362 each coordinate UDP-N-acetyl-alpha-D-galactosamine.

It belongs to the PGAP4 family. In terms of processing, glycosylated.

Its subcellular location is the golgi apparatus membrane. Its function is as follows. Golgi-resident glycosylphosphatidylinositol (GPI)-N-acetylgalactosamine transferase that catalyzes the N-acetyl-beta-D-galactosamine transfer from an UDP-N-acetyl-alpha-D-galactosamine to the 4-OH-position of first mannose of the glycosylphosphatidylinositol (GPI) of a GPI-anchored protein (GPI-AP). This modification occurs after the fatty acid remodeling step of the GPI-anchor maturation. This Pongo abelii (Sumatran orangutan) protein is GPI-N-acetylgalactosamine transferase PGAP4.